A 149-amino-acid chain; its full sequence is Transcriptional repressor NrdR (149 aa).

Residues 3–34 (CPFCGTQDTKVIDSRLVADGASVRRRRECNHC) fold into a zinc finger. The 91-residue stretch at 49 to 139 (PRVIKTDGSR…VYRSFEDIRE (91 aa)) folds into the ATP-cone domain.

Belongs to the NrdR family. Zn(2+) serves as cofactor.

Negatively regulates transcription of bacterial ribonucleotide reductase nrd genes and operons by binding to NrdR-boxes. The sequence is that of Transcriptional repressor NrdR from Idiomarina loihiensis (strain ATCC BAA-735 / DSM 15497 / L2-TR).